A 184-amino-acid polypeptide reads, in one-letter code: Photosystem I assembly protein Ycf4 (184 aa).

2 helical membrane passes run 22–42 (FCWA…GTSS) and 57–77 (IIFF…LFIS).

Belongs to the Ycf4 family.

Its subcellular location is the plastid. It localises to the chloroplast thylakoid membrane. Functionally, seems to be required for the assembly of the photosystem I complex. The sequence is that of Photosystem I assembly protein Ycf4 from Capsella bursa-pastoris (Shepherd's purse).